A 510-amino-acid chain; its full sequence is MEDRRESELKTFCSKNILVILGFSSIIAVIALLALGLTQNKPLPENVKFGIVLDAGSSHTSLYIYKWPAEKENDTGVVSQVEECKLKGPGISEFAKKLGEIDIYLEACMERARTVVPKSQHAETPVYLGATAGMRLLRMKNENLASKILSTVAESITRYPFDFQGARIITGQEEGAYGWITINYLLDKFIQKSGWFNLKPRKGDTQETYGALDLGGASTQITFVPQNQVLESPENTLHFRLYGKNYSVYTHSFLCYGKDQALLQKLTKDLKNTNGTIHEPCFHSGYQRRMNVSHLYEAPCTRRFLTSLPFPELEIQGTGDFQKCQQSIRPLFNTSYCPYSRCSFDGVFLPLPQGDFAAFSAFYYVMGFLNLTSEEGSFQSKVTSTLEAFCSRPWAELQMYFGDVKEKYLSEYCFSGTYILTLLLSGYHFTAETWKNIHFMGKVQSTSVGWTLGYMLNLTNMIPSEEPSSTRLSHSTYVFLMVLFSLILVIVVIIGLFVCHRPSYFWKDMV.

The Cytoplasmic segment spans residues 1–16 (MEDRRESELKTFCSKN). Residues 17–37 (ILVILGFSSIIAVIALLALGL) traverse the membrane as a helical segment. At 38-477 (TQNKPLPENV…SSTRLSHSTY (440 aa)) the chain is on the extracellular side. Residue Asn-73 is glycosylated (N-linked (GlcNAc...) asparagine). Cys-84 and Cys-108 are oxidised to a cystine. Catalysis depends on Glu-174, which acts as the Proton acceptor. N-linked (GlcNAc...) asparagine glycosylation is found at Asn-245, Asn-274, Asn-291, and Asn-333. 2 cysteine pairs are disulfide-bonded: Cys-255-Cys-300 and Cys-281-Cys-324. Cys-337 and Cys-342 are joined by a disulfide. Asn-370 carries an N-linked (GlcNAc...) asparagine glycan. Residues Cys-390 and Cys-413 are joined by a disulfide bond. Residue Asn-457 is glycosylated (N-linked (GlcNAc...) asparagine). Residues 478–498 (VFLMVLFSLILVIVVIIGLFV) traverse the membrane as a helical segment. Residues 499-510 (CHRPSYFWKDMV) lie on the Cytoplasmic side of the membrane.

This sequence belongs to the GDA1/CD39 NTPase family. Homodimer; disulfide-linked. The cofactor is Ca(2+). Requires Mg(2+) as cofactor. In terms of processing, N-glycosylated. Post-translationally, cleaved into two polypeptides that seem to stay together by non-covalent interactions. The N-terminus is blocked. In terms of processing, palmitoylated on Cys-13; which is required for caveola targeting. As to expression, highest expression found in vascular endothelium, smooth muscle, spleen and lung (at protein level). High expression also found in stomach, duodenum, kidney, lymph node and aorta (at protein level).

Its subcellular location is the membrane. It localises to the caveola. The catalysed reaction is a ribonucleoside 5'-triphosphate + 2 H2O = a ribonucleoside 5'-phosphate + 2 phosphate + 2 H(+). The enzyme catalyses a ribonucleoside 5'-triphosphate + H2O = a ribonucleoside 5'-diphosphate + phosphate + H(+). It catalyses the reaction a ribonucleoside 5'-diphosphate + H2O = a ribonucleoside 5'-phosphate + phosphate + H(+). It carries out the reaction ATP + 2 H2O = AMP + 2 phosphate + 2 H(+). The catalysed reaction is ATP + H2O = ADP + phosphate + H(+). The enzyme catalyses ADP + H2O = AMP + phosphate + H(+). It catalyses the reaction CTP + 2 H2O = CMP + 2 phosphate + 2 H(+). It carries out the reaction CTP + H2O = CDP + phosphate + H(+). The catalysed reaction is CDP + H2O = CMP + phosphate + H(+). The enzyme catalyses GTP + 2 H2O = GMP + 2 phosphate + 2 H(+). It catalyses the reaction GTP + H2O = GDP + phosphate + H(+). It carries out the reaction GDP + H2O = GMP + phosphate + H(+). The catalysed reaction is ITP + 2 H2O = IMP + 2 phosphate + 2 H(+). The enzyme catalyses ITP + H2O = IDP + phosphate + H(+). It catalyses the reaction IDP + H2O = IMP + phosphate + H(+). It carries out the reaction UTP + 2 H2O = UMP + 2 phosphate + 2 H(+). The catalysed reaction is UTP + H2O = UDP + phosphate + H(+). The enzyme catalyses UDP + H2O = UMP + phosphate + H(+). Its activity is regulated as follows. The ATP diphosphohydrolase activity is decreased by half by sodium azide. Its function is as follows. Catalyzes the hydrolysis of both di- and triphosphate nucleotides (NDPs and NTPs) and hydrolyze NTPs to nucleotide monophosphates (NMPs) in two distinct successive phosphate-releasing steps, with NDPs as intermediates and participates in the regulation of extracellular levels of nucleotides. By hydrolyzing proinflammatory ATP and platelet-activating ADP to AMP, it blocks platelet aggregation and supports blood flow. The sequence is that of Ectonucleoside triphosphate diphosphohydrolase 1 from Sus scrofa (Pig).